The sequence spans 214 residues: Metalloproteinase inhibitor 3 (214 aa).

Positions 1–26 are cleaved as a signal peptide; the sequence is MSVCALTLILGCFLLFLGDISKPAEG. C27 serves as a coordination point for Zn(2+). Involved in metalloproteinase-binding stretches follow at residues 27–30 and 91–92; these read CTCA and ES. 6 disulfides stabilise this stretch: C27–C94, C29–C121, C39–C146, C148–C195, C153–C158, and C166–C187. Positions 27–146 constitute an NTR domain; sequence CTCAPSHPQD…GLNHRYPLGC (120 aa).

It belongs to the protease inhibitor I35 (TIMP) family.

The protein resides in the secreted. Its subcellular location is the extracellular space. It is found in the extracellular matrix. In terms of biological role, complexes with metalloproteinases (such as collagenases) and irreversibly inactivates them by binding to their catalytic zinc cofactor. May form part of a tissue-specific acute response to remodeling stimuli. The chain is Metalloproteinase inhibitor 3 (timp3) from Xenopus laevis (African clawed frog).